We begin with the raw amino-acid sequence, 285 residues long: Nucleotide-binding protein PFL_0912 (285 aa).

8–15 (GRSGSGKS) serves as a coordination point for ATP. 60–63 (DARN) serves as a coordination point for GTP.

It belongs to the RapZ-like family.

Functionally, displays ATPase and GTPase activities. The protein is Nucleotide-binding protein PFL_0912 of Pseudomonas fluorescens (strain ATCC BAA-477 / NRRL B-23932 / Pf-5).